We begin with the raw amino-acid sequence, 320 residues long: Cytochrome f (320 aa).

An N-terminal signal peptide occupies residues 1 to 35 (MEKRNTYDWVTRWVIASFSILTISYMITWTSISNA). Positions 36, 56, 59, and 60 each coordinate heme. Residues 286–306 (IQGLLVFLASVVLAQIFLVLK) traverse the membrane as a helical segment.

The protein belongs to the cytochrome f family. As to quaternary structure, the 4 large subunits of the cytochrome b6-f complex are cytochrome b6, subunit IV (17 kDa polypeptide, petD), cytochrome f and the Rieske protein, while the 4 small subunits are PetG, PetL, PetM and PetN. The complex functions as a dimer. It depends on heme as a cofactor.

It localises to the plastid. The protein localises to the chloroplast thylakoid membrane. Functionally, component of the cytochrome b6-f complex, which mediates electron transfer between photosystem II (PSII) and photosystem I (PSI), cyclic electron flow around PSI, and state transitions. This Welwitschia mirabilis (Tree tumbo) protein is Cytochrome f.